A 584-amino-acid chain; its full sequence is MSNNFTKVENPVLIVEGKQADNERLKAESDYLRGTIKDDLQDRMTGGFTSDNFQLIRTHGMYQQDDRDIRAERQKQKLEPLHNVMLRARLPGGIINPTQWLAIDKFADDYTSYGSIRLTTRQTFQFHGVLKPNIKLMHQTLNSVGLDSIATAGDVNRNVLCTSNPVESALHQEAYEWATKISEHLLPKTRAYAEIWLDEEKVETTEADEIEPILGSNYLPRKFKTTVVIPPNNDIDVHANDLNFVAISEGGELIGFNVLVGGGLAMTHGDKATYPRCADDFGFIPKEHTLAIAAAVVTTQRDWGNRVNRKNAKTKYTLDRVGVDTFKAEVERRAGIKFSESRSYEFTHRGDSFGWVEGIDGKNHLTLFIENGRILDFNGANSDSKALKTGMREIAKIHKGDFRLTANQNLIVAGVSAEDKTIIEQLAREHGLINDGVSNQRKSSMACVAFPTCPLAMAEAERYLPGLVDDVEAILEKNGLKDDSIILRVTGCPNGCGRAMLAEIGLVGKGPGKYNMYLGSDLAGSRVPKLYKENVDEAGVLSEIDALSARWSAERNDGEAFGDFVIRAGIVEQVIVSFRDFHHA.

[4Fe-4S] cluster contacts are provided by Cys-447, Cys-453, Cys-492, and Cys-496. Cys-496 contacts siroheme.

The protein belongs to the nitrite and sulfite reductase 4Fe-4S domain family. As to quaternary structure, alpha(8)-beta(8). The alpha component is a flavoprotein, the beta component is a hemoprotein. Requires siroheme as cofactor. The cofactor is [4Fe-4S] cluster.

It carries out the reaction hydrogen sulfide + 3 NADP(+) + 3 H2O = sulfite + 3 NADPH + 4 H(+). The protein operates within sulfur metabolism; hydrogen sulfide biosynthesis; hydrogen sulfide from sulfite (NADPH route): step 1/1. Functionally, component of the sulfite reductase complex that catalyzes the 6-electron reduction of sulfite to sulfide. This is one of several activities required for the biosynthesis of L-cysteine from sulfate. The sequence is that of Sulfite reductase [NADPH] hemoprotein beta-component from Colwellia psychrerythraea (strain 34H / ATCC BAA-681) (Vibrio psychroerythus).